The chain runs to 224 residues: UPF0758 protein AHA_0160 (224 aa).

The region spanning 102 to 224 (PLTSPQLTRD…TVSFAERGWL (123 aa)) is the MPN domain. The Zn(2+) site is built by H173, H175, and D186. The JAMM motif motif lies at 173–186 (HNHPSGVAEPSRAD).

This sequence belongs to the UPF0758 family.

This Aeromonas hydrophila subsp. hydrophila (strain ATCC 7966 / DSM 30187 / BCRC 13018 / CCUG 14551 / JCM 1027 / KCTC 2358 / NCIMB 9240 / NCTC 8049) protein is UPF0758 protein AHA_0160.